A 182-amino-acid chain; its full sequence is MNDQLSRAMRLLSQRDHSESELRRKLAAPPFSAKGNWGKRSGAKSSNLVESNPVESNLAESNAIEESDPQVIEQVIDYCYQHNWLDDSRFAASYINSRSRKGYGVQRIRSELMQKGVDKERILAAFENSEIDWCQLAKEVAQRKFSETLPVEWKEKAKVQRYLLYRGFFQEEIQSIYTDSVE.

The interval 12–54 (LSQRDHSESELRRKLAAPPFSAKGNWGKRSGAKSSNLVESNPV) is disordered. Residues 13 to 24 (SQRDHSESELRR) show a composition bias toward basic and acidic residues. A compositionally biased stretch (polar residues) spans 43–54 (AKSSNLVESNPV).

The protein belongs to the RecX family.

The protein localises to the cytoplasm. Modulates RecA activity. The chain is Regulatory protein RecX from Yersinia pseudotuberculosis serotype I (strain IP32953).